Reading from the N-terminus, the 268-residue chain is HLA class II histocompatibility antigen, DQ beta 2 chain (268 aa).

A signal peptide spans methionine 1 to alanine 32. The tract at residues arginine 33 to valine 126 is beta-1. The Extracellular portion of the chain corresponds to arginine 33–lysine 229. 2 disulfides stabilise this stretch: cysteine 47-cysteine 110 and cysteine 148-cysteine 204. N-linked (GlcNAc...) asparagine glycosylation is present at asparagine 51. Residues glutamate 127–lysine 229 form a beta-2 region. Positions proline 128 to threonine 216 constitute an Ig-like C1-type domain. A helical transmembrane segment spans residues methionine 230–isoleucine 250. The Cytoplasmic portion of the chain corresponds to arginine 251–histidine 268.

The protein belongs to the MHC class II family. Heterodimer of an alpha and a beta subunit; also referred as MHC class II molecule. Dimer formation with HLA-DQA2, but not with HLA-DQA1, is required for efficient exit from the endoplasmic reticulum (ER). In the ER, forms a heterononamer; 3 MHC class II molecules bind to a CD74 homotrimer (also known as invariant chain or HLA class II histocompatibility antigen gamma chain). In the endosomal/lysosomal system; CD74 undergoes sequential degradation by various proteases; leaving a small fragment termed CLIP on each MHC class II molecule. MHC class II molecule interacts with HLA_DM, and HLA_DO in B-cells, in order to release CLIP and facilitate the binding of antigenic peptides. Association with HLA-DMA also occurs in skin Langerhans cells, in post-Golgi compartments. In terms of tissue distribution, restricted to skin Langerhans cells (at protein level).

It localises to the cell membrane. Its subcellular location is the endoplasmic reticulum membrane. The protein localises to the golgi apparatus. It is found in the trans-Golgi network membrane. The protein resides in the endosome membrane. It localises to the lysosome membrane. In terms of biological role, binds peptides derived from antigens that access the endocytic route of antigen presenting cells (APC) and presents them on the cell surface for recognition by the CD4 T-cells. The peptide binding cleft accommodates peptides of 10-30 residues. The peptides presented by MHC class II molecules are generated mostly by degradation of proteins that access the endocytic route, where they are processed by lysosomal proteases and other hydrolases. Exogenous antigens that have been endocytosed by the APC are thus readily available for presentation via MHC II molecules, and for this reason this antigen presentation pathway is usually referred to as exogenous. As membrane proteins on their way to degradation in lysosomes as part of their normal turn-over are also contained in the endosomal/lysosomal compartments, exogenous antigens must compete with those derived from endogenous components. Autophagy is also a source of endogenous peptides, autophagosomes constitutively fuse with MHC class II loading compartments. In addition to APCs, other cells of the gastrointestinal tract, such as epithelial cells, express MHC class II molecules and CD74 and act as APCs, which is an unusual trait of the GI tract. To produce a MHC class II molecule that presents an antigen, three MHC class II molecules (heterodimers of an alpha and a beta chain) associate with a CD74 trimer in the ER to form a heterononamer. Soon after the entry of this complex into the endosomal/lysosomal system where antigen processing occurs, CD74 undergoes a sequential degradation by various proteases, including CTSS and CTSL, leaving a small fragment termed CLIP (class-II-associated invariant chain peptide). The removal of CLIP is facilitated by HLA-DM via direct binding to the alpha-beta-CLIP complex so that CLIP is released. HLA-DM stabilizes MHC class II molecules until primary high affinity antigenic peptides are bound. The MHC II molecule bound to a peptide is then transported to the cell membrane surface. In B-cells, the interaction between HLA-DM and MHC class II molecules is regulated by HLA-DO. Primary dendritic cells (DCs) also to express HLA-DO. Lysosomal microenvironment has been implicated in the regulation of antigen loading into MHC II molecules, increased acidification produces increased proteolysis and efficient peptide loading. In Homo sapiens (Human), this protein is HLA class II histocompatibility antigen, DQ beta 2 chain (HLA-DQB2).